Here is a 369-residue protein sequence, read N- to C-terminus: DNA replication and repair protein RecF (369 aa).

Gly-30–Thr-37 serves as a coordination point for ATP.

Belongs to the RecF family.

It is found in the cytoplasm. In terms of biological role, the RecF protein is involved in DNA metabolism; it is required for DNA replication and normal SOS inducibility. RecF binds preferentially to single-stranded, linear DNA. It also seems to bind ATP. The polypeptide is DNA replication and repair protein RecF (Chlorobium luteolum (strain DSM 273 / BCRC 81028 / 2530) (Pelodictyon luteolum)).